Here is a 783-residue protein sequence, read N- to C-terminus: MGDEKDSWKVKTLDEILQEKKRRKEQEEKAEIKRLKNSDDRDSKRDSLEEGELRDHCMEITIRNSPYRREDSMEDRGEEDDSLAIKPPQQMSRKEKVHHRKDEKRKEKWKHARVKEREHERRKRHREEQDKARREWERQKRREMAREHSRRERDRLEQLERKRERERKMREQQKEQREQKERERRAEERRKEREARREVSAHHRTMREDYSDKVKASHWSRSPPRPPRERFELGDGRKPGEARPAPAQKPAQLKEEKMEERDLLSDLQDISDSERKTSSAESSSAESGSGSEEEEEEEEEEEEEGSTSEESEEEEEEEEEEEEETGSNSEEASEQSAEEVSEEEMSEDEERENENHLLVVPESRFDRDSGESEEAEEEVGEGTPQSSALTEGDYVPDSPALLPIELKQELPKYLPALQGCRSVEEFQCLNRIEEGTYGVVYRAKDKKTDEIVALKRLKMEKEKEGFPITSLREINTILKAQHPNIVTVREIVVGSNMDKIYIVMNYVEHDLKSLMETMKQPFLPGEVKTLMIQLLRGVKHLHDNWILHRDLKTSNLLLSHAGILKVGDFGLAREYGSPLKAYTPVVVTQWYRAPELLLGAKEYSTAVDMWSVGCIFGELLTQKPLFPGNSEIDQINKVFKELGTPSEKIWPGYSELPVVKKMTFSEHPYNNLRKRFGALLSDQGFDLMNKFLTYFPGRRISAEDGLKHEYFRETPLPIDPSMFPTWPAKSEQQRVKRGTSPRPPEGGLGYSQLGDDDLKETGFHLTTTNQGASAAGPGFSLKF.

Residues 18 to 58 (QEKKRRKEQEEKAEIKRLKNSDDRDSKRDSLEEGELRDHCM) are compositionally biased toward basic and acidic residues. The tract at residues 18-396 (QEKKRRKEQE…SALTEGDYVP (379 aa)) is disordered. Phosphoserine is present on residues Ser47 and Ser72. Basic residues predominate over residues 95–125 (EKVHHRKDEKRKEKWKHARVKEREHERRKRH). Composition is skewed to basic and acidic residues over residues 126–215 (REEQ…DKVK), 226–241 (PPRE…KPGE), and 252–264 (QLKE…RDLL). Ser271 is subject to Phosphoserine. Over residues 279 to 290 (SAESSSAESGSG) the composition is skewed to low complexity. Composition is skewed to acidic residues over residues 291-352 (SEEE…EERE) and 371-380 (ESEEAEEEVG). The 221-residue stretch at 427–647 (QCLNRIEEGT…VFKELGTPSE (221 aa)) folds into the Protein kinase domain. ATP-binding positions include 432–440 (IEEGTYGVV) and Lys455. Ser470 carries the post-translational modification Phosphoserine; by CDK7. The residue at position 476 (Thr476) is a Phosphothreonine; by CDK7. The active-site Proton acceptor is Asp550. Ser577 is modified (phosphoserine). A Phosphotyrosine modification is found at Tyr582. Thr583 and Thr739 each carry phosphothreonine. The interval 721-783 (SMFPTWPAKS…AAGPGFSLKF (63 aa)) is disordered. The residue at position 740 (Ser740) is a Phosphoserine.

Belongs to the protein kinase superfamily. CMGC Ser/Thr protein kinase family. CDC2/CDKX subfamily. The cleaved p110 isoform, p110C, binds to the serine/threonine kinase PAK1. The p58 isoform but not the p110 isoform or p110C interacts with CCND3. The p110 isoforms are found in large molecular weight complexes containing CCNL1 and SFRS7. It depends on Mg(2+) as a cofactor. During apoptosis, induced by Fas or tumor necrosis factor, specific CKD11 p110 isoforms are cleaved by caspases to produce a protein (p110C) that contains the C-terminal kinase domain of the CDK11 proteins. In terms of tissue distribution, expressed ubiquitously. Some evidence of isoform-specific tissue distribution.

The protein localises to the cytoplasm. The protein resides in the nucleus. It catalyses the reaction L-seryl-[protein] + ATP = O-phospho-L-seryl-[protein] + ADP + H(+). It carries out the reaction L-threonyl-[protein] + ATP = O-phospho-L-threonyl-[protein] + ADP + H(+). Its activity is regulated as follows. Phosphorylation at Thr-436 or Tyr-437 inactivates the enzyme, while phosphorylation at Thr-583 activates it. Appears to play multiple roles in cell cycle progression, cytokinesis and apoptosis. The p110 isoforms have been suggested to be involved in pre-mRNA splicing, potentially by phosphorylating the splicing protein SFRS7. The p58 isoform may act as a negative regulator of normal cell cycle progression. This chain is Cyclin-dependent kinase 11A (CDK11A), found in Homo sapiens (Human).